A 420-amino-acid chain; its full sequence is Glutamyl-tRNA reductase (420 aa).

Substrate-binding positions include 49-52 (TCNR), S109, 114-116 (EPQ), and Q120. The Nucleophile role is filled by C50. 189–194 (GAGETI) is a binding site for NADP(+).

This sequence belongs to the glutamyl-tRNA reductase family. In terms of assembly, homodimer.

The enzyme catalyses (S)-4-amino-5-oxopentanoate + tRNA(Glu) + NADP(+) = L-glutamyl-tRNA(Glu) + NADPH + H(+). The protein operates within porphyrin-containing compound metabolism; protoporphyrin-IX biosynthesis; 5-aminolevulinate from L-glutamyl-tRNA(Glu): step 1/2. Catalyzes the NADPH-dependent reduction of glutamyl-tRNA(Glu) to glutamate 1-semialdehyde (GSA). The protein is Glutamyl-tRNA reductase of Yersinia enterocolitica serotype O:8 / biotype 1B (strain NCTC 13174 / 8081).